Consider the following 440-residue polypeptide: C-terminal-binding protein 1 (440 aa).

NAD(+) contacts are provided by residues Ser-100, 180 to 185, Asp-204, 237 to 243, 264 to 266, and Asp-290; these read IGLGRV, CGLNEHN, and TAR. Residue Arg-266 is part of the active site. The active site involves Glu-295. His-315 functions as the Proton donor in the catalytic mechanism. Residue 315–318 participates in NAD(+) binding; that stretch reads HAAW. The disordered stretch occupies residues 409 to 440; sequence HAHPAVAHPPHAPSPGQTIKPEADRDHPSDQL. A compositionally biased stretch (basic and acidic residues) spans 429–440; that stretch reads PEADRDHPSDQL.

This sequence belongs to the D-isomer specific 2-hydroxyacid dehydrogenase family. NAD(+) serves as cofactor.

It localises to the nucleus. Functionally, corepressor targeting diverse transcription regulators. Has dehydrogenase activity. This Xenopus laevis (African clawed frog) protein is C-terminal-binding protein 1 (ctbp1).